A 234-amino-acid chain; its full sequence is BTB/POZ domain-containing protein KCTD5 (234 aa).

Ala2 is subject to N-acetylalanine. The BTB domain occupies 44–146 (KWVRLNVGGT…LVKDKIRERD (103 aa)). Residues 213–234 (PYGTTSEPSEKAKILQERGSRM) form a disordered region. The segment covering 220-234 (PSEKAKILQERGSRM) has biased composition (basic and acidic residues).

Homopentamer. Interacts (via C-terminus) with GRASP55/GORASP2. Interacts with CUL3 and with ubiquitinated proteins. Interacts with CRY1.

The protein localises to the cytoplasm. Its subcellular location is the cytosol. It localises to the nucleus. Functionally, its interaction with CUL3 suggests that it may act as a substrate adapter in some E3 ligase complex. Does not affect the function of Kv channel Kv2.1/KCNB1, Kv1.2/KCNA2, Kv4.2/KCND2 and Kv3.4/KCNC4. The polypeptide is BTB/POZ domain-containing protein KCTD5 (Kctd5) (Mus musculus (Mouse)).